Here is a 25-residue protein sequence, read N- to C-terminus: Cruzioseptin-13 (25 aa).

Asn-25 bears the Asparagine amide mark.

In terms of tissue distribution, expressed by the skin glands.

It is found in the secreted. Has antimicrobial activity. The sequence is that of Cruzioseptin-13 from Cruziohyla calcarifer (Splendid leaf frog).